We begin with the raw amino-acid sequence, 426 residues long: Gamma-glutamyl phosphate reductase (426 aa).

The protein belongs to the gamma-glutamyl phosphate reductase family.

Its subcellular location is the cytoplasm. The catalysed reaction is L-glutamate 5-semialdehyde + phosphate + NADP(+) = L-glutamyl 5-phosphate + NADPH + H(+). Its pathway is amino-acid biosynthesis; L-proline biosynthesis; L-glutamate 5-semialdehyde from L-glutamate: step 2/2. Catalyzes the NADPH-dependent reduction of L-glutamate 5-phosphate into L-glutamate 5-semialdehyde and phosphate. The product spontaneously undergoes cyclization to form 1-pyrroline-5-carboxylate. The polypeptide is Gamma-glutamyl phosphate reductase (Cupriavidus pinatubonensis (strain JMP 134 / LMG 1197) (Cupriavidus necator (strain JMP 134))).